Reading from the N-terminus, the 299-residue chain is ATP phosphoribosyltransferase (299 aa).

The protein belongs to the ATP phosphoribosyltransferase family. Long subfamily. Equilibrium between an active dimeric form, an inactive hexameric form and higher aggregates. Interconversion between the various forms is largely reversible and is influenced by the natural substrates and inhibitors of the enzyme. Mg(2+) is required as a cofactor.

The protein localises to the cytoplasm. It catalyses the reaction 1-(5-phospho-beta-D-ribosyl)-ATP + diphosphate = 5-phospho-alpha-D-ribose 1-diphosphate + ATP. Its pathway is amino-acid biosynthesis; L-histidine biosynthesis; L-histidine from 5-phospho-alpha-D-ribose 1-diphosphate: step 1/9. Its activity is regulated as follows. Feedback inhibited by histidine. In terms of biological role, catalyzes the condensation of ATP and 5-phosphoribose 1-diphosphate to form N'-(5'-phosphoribosyl)-ATP (PR-ATP). Has a crucial role in the pathway because the rate of histidine biosynthesis seems to be controlled primarily by regulation of HisG enzymatic activity. This chain is ATP phosphoribosyltransferase, found in Proteus mirabilis (strain HI4320).